We begin with the raw amino-acid sequence, 591 residues long: Aspartate--tRNA(Asp/Asn) ligase (591 aa).

An L-aspartate-binding site is contributed by Glu174. The aspartate stretch occupies residues 198–201 (QLFK). Arg220 contributes to the L-aspartate binding site. ATP is bound by residues 220–222 (RDE) and Gln229. His450 is a binding site for L-aspartate. An ATP-binding site is contributed by Glu483. Position 490 (Arg490) interacts with L-aspartate. 535–538 (GLDR) is an ATP binding site.

Belongs to the class-II aminoacyl-tRNA synthetase family. Type 1 subfamily. In terms of assembly, homodimer.

It localises to the cytoplasm. It carries out the reaction tRNA(Asx) + L-aspartate + ATP = L-aspartyl-tRNA(Asx) + AMP + diphosphate. Functionally, aspartyl-tRNA synthetase with relaxed tRNA specificity since it is able to aspartylate not only its cognate tRNA(Asp) but also tRNA(Asn). Reaction proceeds in two steps: L-aspartate is first activated by ATP to form Asp-AMP and then transferred to the acceptor end of tRNA(Asp/Asn). The polypeptide is Aspartate--tRNA(Asp/Asn) ligase (Ectopseudomonas mendocina (strain ymp) (Pseudomonas mendocina)).